A 150-amino-acid chain; its full sequence is Large ribosomal subunit protein bL9 (150 aa).

The protein belongs to the bacterial ribosomal protein bL9 family.

Binds to the 23S rRNA. This is Large ribosomal subunit protein bL9 from Pectobacterium carotovorum subsp. carotovorum (strain PC1).